A 294-amino-acid chain; its full sequence is Cytosolic Fe-S cluster assembly factor CFD1 (294 aa).

Position 25–32 (25–32) interacts with ATP; sequence GKGGVGKS. [4Fe-4S] cluster is bound by residues Cys-214 and Cys-217.

This sequence belongs to the Mrp/NBP35 ATP-binding proteins family. NUBP2/CFD1 subfamily. Heterotetramer of 2 NBP35 and 2 CFD1 chains. [4Fe-4S] cluster serves as cofactor.

The protein resides in the cytoplasm. In terms of biological role, component of the cytosolic iron-sulfur (Fe/S) protein assembly (CIA) machinery. Required for maturation of extramitochondrial Fe-S proteins. The NBP35-CFD1 heterotetramer forms a Fe-S scaffold complex, mediating the de novo assembly of an Fe-S cluster and its transfer to target apoproteins. Required for biogenesis and export of both ribosomal subunits, which may reflect a role in assembly of the Fe/S clusters in RLI1, a protein which performs rRNA processing and ribosome export. This Candida albicans (strain SC5314 / ATCC MYA-2876) (Yeast) protein is Cytosolic Fe-S cluster assembly factor CFD1.